The following is a 598-amino-acid chain: Elongation factor 4 (598 aa).

One can recognise a tr-type G domain in the interval 5–187; it reads SHIRNFSIIA…RLVATIPAPI (183 aa). GTP contacts are provided by residues 17 to 22 and 134 to 137; these read DHGKST and NKID.

The protein belongs to the TRAFAC class translation factor GTPase superfamily. Classic translation factor GTPase family. LepA subfamily.

The protein resides in the cell inner membrane. It carries out the reaction GTP + H2O = GDP + phosphate + H(+). Functionally, required for accurate and efficient protein synthesis under certain stress conditions. May act as a fidelity factor of the translation reaction, by catalyzing a one-codon backward translocation of tRNAs on improperly translocated ribosomes. Back-translocation proceeds from a post-translocation (POST) complex to a pre-translocation (PRE) complex, thus giving elongation factor G a second chance to translocate the tRNAs correctly. Binds to ribosomes in a GTP-dependent manner. This Pseudomonas fluorescens (strain Pf0-1) protein is Elongation factor 4.